A 236-amino-acid chain; its full sequence is Small ribosomal subunit protein uS2c (236 aa).

Belongs to the universal ribosomal protein uS2 family.

It is found in the plastid. The protein resides in the chloroplast. The chain is Small ribosomal subunit protein uS2c (rps2) from Illicium oligandrum (Star anise).